A 434-amino-acid polypeptide reads, in one-letter code: Eukaryotic peptide chain release factor subunit 1-2 (434 aa).

Ala-2 bears the N-acetylalanine mark.

The protein belongs to the eukaryotic release factor 1 family. In terms of assembly, heterodimer of two subunits, one of which binds GTP.

It localises to the cytoplasm. Functionally, directs the termination of nascent peptide synthesis (translation) in response to the termination codons UAA, UAG and UGA. Modulates plant growth and development. In Arabidopsis thaliana (Mouse-ear cress), this protein is Eukaryotic peptide chain release factor subunit 1-2.